Here is an 81-residue protein sequence, read N- to C-terminus: Large ribosomal subunit protein bL31B (81 aa).

Belongs to the bacterial ribosomal protein bL31 family. Type B subfamily. As to quaternary structure, part of the 50S ribosomal subunit.

In Oceanobacillus iheyensis (strain DSM 14371 / CIP 107618 / JCM 11309 / KCTC 3954 / HTE831), this protein is Large ribosomal subunit protein bL31B.